A 311-amino-acid chain; its full sequence is MFHHVSVMLRETIDELNVKKDGVYVDCTLGGAGHALYLLNQLDENGHLIAIDQDLTAIENAKEVLKDHLDQVTFVHSNFRQINQILDDLDIDKVDGIYYDLGVSSPQLDVPERGFSYHQDARLDMRMDQTQELSAYEVVNEWPYEDLVRIFYRYGEEKFSKQIARRIEKTRENEPIETTLQLVDVIKEGIPAKARRKGGHPAKRVFQAIRIAVNDELKAFEDSLEQAIERVKVHGRISVITFHSLEDRLCKQIFQEYEKGPEVPRGLPIIPEEYTPKLKRVNRKPISASEEDLAENNRARSAKLRVAEILK.

S-adenosyl-L-methionine is bound by residues 32–34 (AGH), aspartate 52, phenylalanine 79, aspartate 100, and glutamine 107.

It belongs to the methyltransferase superfamily. RsmH family.

Its subcellular location is the cytoplasm. It carries out the reaction cytidine(1402) in 16S rRNA + S-adenosyl-L-methionine = N(4)-methylcytidine(1402) in 16S rRNA + S-adenosyl-L-homocysteine + H(+). Functionally, specifically methylates the N4 position of cytidine in position 1402 (C1402) of 16S rRNA. This is Ribosomal RNA small subunit methyltransferase H from Staphylococcus carnosus (strain TM300).